Here is a 110-residue protein sequence, read N- to C-terminus: Iron-sulfur cluster assembly protein CyaY (110 aa).

It belongs to the frataxin family.

In terms of biological role, involved in iron-sulfur (Fe-S) cluster assembly. May act as a regulator of Fe-S biogenesis. The chain is Iron-sulfur cluster assembly protein CyaY from Pseudomonas syringae pv. tomato (strain ATCC BAA-871 / DC3000).